Consider the following 295-residue polypeptide: Putative sugar uptake protein YxfA (295 aa).

Helical transmembrane passes span 4–26 (VLLALVPMFAWGSIGFVANKFGG), 33–50 (LGMTLGAFVFALIVFLFR), 54–72 (LTWQIFLIGFIGGLLWAIG), 85–107 (VSVASPLSSGSQLVIGGLIGVFA), 117–135 (FILGFIAMAVLVVGFYFSA), 156–178 (ALTYSTLGYVIYVILFNNLAVLW), 188–206 (IILPMSVGMIFGALVMGRF), 213–235 (YVYQNMIVGAMWGVGNIFMLMAA), 241–263 (AIAFSFSQLGVIVSTIGGILFLG), and 270–291 (ELVYVGIGIVLFVTGAILLAIV).

It belongs to the GRP transporter (TC 2.A.7.5) family.

The protein resides in the cell membrane. This Lactococcus lactis subsp. lactis (strain IL1403) (Streptococcus lactis) protein is Putative sugar uptake protein YxfA (yxfA).